Here is a 326-residue protein sequence, read N- to C-terminus: Pyruvate dehydrogenase E1 component subunit alpha (326 aa).

Heterodimer of an alpha and a beta chain. Requires thiamine diphosphate as cofactor.

It carries out the reaction N(6)-[(R)-lipoyl]-L-lysyl-[protein] + pyruvate + H(+) = N(6)-[(R)-S(8)-acetyldihydrolipoyl]-L-lysyl-[protein] + CO2. Its function is as follows. The pyruvate dehydrogenase complex catalyzes the overall conversion of pyruvate to acetyl-CoA and CO(2). It contains multiple copies of three enzymatic components: pyruvate dehydrogenase (E1), dihydrolipoamide acetyltransferase (E2) and lipoamide dehydrogenase (E3). In Rickettsia typhi (strain ATCC VR-144 / Wilmington), this protein is Pyruvate dehydrogenase E1 component subunit alpha (pdhA).